A 124-amino-acid polypeptide reads, in one-letter code: Ribonuclease pancreatic (124 aa).

The tract at residues 1–24 (KESSAMKFQRQHMDSSGSPSTNAN) is disordered. Residues K7 and R10 each coordinate substrate. The active-site Proton acceptor is H12. The span at 14–24 (DSSGSPSTNAN) shows a compositional bias: polar residues. Intrachain disulfides connect C26-C84, C40-C95, C58-C110, and C65-C72. The N-linked (GlcNAc...) asparagine glycan is linked to N34. Substrate contacts are provided by residues 41–45 (KPVNT), K66, and R85. The Proton donor role is filled by H119.

It belongs to the pancreatic ribonuclease family. As to quaternary structure, monomer. Interacts with and forms tight 1:1 complexes with RNH1. Dimerization of two such complexes may occur. Interaction with RNH1 inhibits this protein. As to expression, pancreas.

The protein resides in the secreted. It carries out the reaction an [RNA] containing cytidine + H2O = an [RNA]-3'-cytidine-3'-phosphate + a 5'-hydroxy-ribonucleotide-3'-[RNA].. It catalyses the reaction an [RNA] containing uridine + H2O = an [RNA]-3'-uridine-3'-phosphate + a 5'-hydroxy-ribonucleotide-3'-[RNA].. Endonuclease that catalyzes the cleavage of RNA on the 3' side of pyrimidine nucleotides. Acts on single-stranded and double-stranded RNA. The chain is Ribonuclease pancreatic (RNASE1) from Chinchilla chinchilla (Short-tailed chinchilla).